The primary structure comprises 203 residues: E3 ubiquitin-protein ligase RNF152 (203 aa).

Residues Cys-12–Arg-55 form an RING-type zinc finger. Residues Ile-106–Thr-165 form a necessary for interaction with RRAGA region. The chain crosses the membrane as a helical span at residues Ser-167–Leu-187.

It belongs to the RNF152 family. Interacts with RRAGA (inactive GDP-bound form); stimulated by amino acid starvation. Interacts with SEC16A. Post-translationally, ubiquitinated. Autoubiquitinated in vitro, leading to its degradation by the proteasome. As to expression, widely expressed.

The protein resides in the lysosome membrane. It catalyses the reaction S-ubiquitinyl-[E2 ubiquitin-conjugating enzyme]-L-cysteine + [acceptor protein]-L-lysine = [E2 ubiquitin-conjugating enzyme]-L-cysteine + N(6)-ubiquitinyl-[acceptor protein]-L-lysine.. Its pathway is protein modification; protein ubiquitination. E3 ubiquitin-protein ligase that acts as a negative regulator of mTORC1 signaling by mediating ubiquitination of RagA/RRAGA and RHEB. Catalyzes 'Lys-63'-linked polyubiquitination of RagA/RRAGA in response to amino acid starvation, thereby regulating mTORC1 signaling. Also mediates monoubiquitination of RHEB, promoting its association with the TSC-TBC complex and subsequent inhibition. Also mediates 'Lys-48'-linked polyubiquitination of target proteins and their subsequent targeting to the proteasome for degradation. Induces apoptosis when overexpressed. The sequence is that of E3 ubiquitin-protein ligase RNF152 from Homo sapiens (Human).